A 170-amino-acid polypeptide reads, in one-letter code: Peptide deformylase (170 aa).

2 residues coordinate Fe cation: Cys94 and His136. The active site involves Glu137. His140 is a Fe cation binding site.

The protein belongs to the polypeptide deformylase family. Fe(2+) is required as a cofactor.

The catalysed reaction is N-terminal N-formyl-L-methionyl-[peptide] + H2O = N-terminal L-methionyl-[peptide] + formate. Its function is as follows. Removes the formyl group from the N-terminal Met of newly synthesized proteins. Requires at least a dipeptide for an efficient rate of reaction. N-terminal L-methionine is a prerequisite for activity but the enzyme has broad specificity at other positions. In Agrobacterium fabrum (strain C58 / ATCC 33970) (Agrobacterium tumefaciens (strain C58)), this protein is Peptide deformylase.